The primary structure comprises 133 residues: Small ribosomal subunit protein uS11 (133 aa).

Belongs to the universal ribosomal protein uS11 family. In terms of assembly, part of the 30S ribosomal subunit. Interacts with proteins S7 and S18. Binds to IF-3.

Located on the platform of the 30S subunit, it bridges several disparate RNA helices of the 16S rRNA. Forms part of the Shine-Dalgarno cleft in the 70S ribosome. This Christiangramia forsetii (strain DSM 17595 / CGMCC 1.15422 / KT0803) (Gramella forsetii) protein is Small ribosomal subunit protein uS11.